We begin with the raw amino-acid sequence, 171 residues long: Vimentin-type intermediate filament-associated coiled-coil protein (171 aa).

Residues 7–98 (LQIREANAHL…QRDQMIQELQ (92 aa)) are a coiled coil. The segment at 126-171 (ELGPLPSSHSHGAQLLPDGPGPPLGNSMREEEGQDDQQPAVFGTTV) is disordered.

Expressed in brain, heart, kidney, liver, lung, skeletal muscle, spleen and testis. Within the kidney expression is pronounced within glomeruli.

The protein localises to the cytoplasm. The protein is Vimentin-type intermediate filament-associated coiled-coil protein (Vmac) of Rattus norvegicus (Rat).